A 184-amino-acid polypeptide reads, in one-letter code: Ribosome maturation factor RimP (184 aa).

It belongs to the RimP family.

The protein resides in the cytoplasm. In terms of biological role, required for maturation of 30S ribosomal subunits. The sequence is that of Ribosome maturation factor RimP from Zymomonas mobilis subsp. mobilis (strain ATCC 31821 / ZM4 / CP4).